The chain runs to 103 residues: MKRALTSVVLAPRNAAIAVISLYRRVVSPIYGDVCRYYPSCSAYGLEAVQEHGLVHGGVLAAWRVCRCHPWAEGGIDDVPARRVQQYRRTRLGFVVAPSHGKG.

It belongs to the UPF0161 family.

It is found in the cell membrane. Could be involved in insertion of integral membrane proteins into the membrane. This Clavibacter michiganensis subsp. michiganensis (strain NCPPB 382) protein is Putative membrane protein insertion efficiency factor.